Reading from the N-terminus, the 638-residue chain is Threonine--tRNA ligase (638 aa).

The 59-residue stretch at 1-59 (MEKIKVKIKGKEYEVEKGTPLGKIFELAGIKDALGGVINGKIIDLQTPVRESGEIKPVY) folds into the TGS domain. The interval 243–536 (DHRRLGKELE…LLEHYAGLLP (294 aa)) is catalytic. Zn(2+) contacts are provided by Cys336, His387, and His513.

This sequence belongs to the class-II aminoacyl-tRNA synthetase family. Homodimer. It depends on Zn(2+) as a cofactor.

It is found in the cytoplasm. The enzyme catalyses tRNA(Thr) + L-threonine + ATP = L-threonyl-tRNA(Thr) + AMP + diphosphate + H(+). In terms of biological role, catalyzes the attachment of threonine to tRNA(Thr) in a two-step reaction: L-threonine is first activated by ATP to form Thr-AMP and then transferred to the acceptor end of tRNA(Thr). Also edits incorrectly charged L-seryl-tRNA(Thr). The chain is Threonine--tRNA ligase from Aquifex aeolicus (strain VF5).